The following is a 147-amino-acid chain: Large ribosomal subunit protein bL9 (147 aa).

The protein belongs to the bacterial ribosomal protein bL9 family.

In terms of biological role, binds to the 23S rRNA. The protein is Large ribosomal subunit protein bL9 of Clostridium botulinum (strain Alaska E43 / Type E3).